Consider the following 137-residue polypeptide: Nucleoside diphosphate kinase (137 aa).

Residues Lys-9, Phe-57, Arg-85, Thr-91, Arg-102, and Asn-112 each coordinate ATP. His-115 serves as the catalytic Pros-phosphohistidine intermediate.

It belongs to the NDK family. As to quaternary structure, homotetramer. Mg(2+) is required as a cofactor.

The protein resides in the cytoplasm. The enzyme catalyses a 2'-deoxyribonucleoside 5'-diphosphate + ATP = a 2'-deoxyribonucleoside 5'-triphosphate + ADP. The catalysed reaction is a ribonucleoside 5'-diphosphate + ATP = a ribonucleoside 5'-triphosphate + ADP. In terms of biological role, major role in the synthesis of nucleoside triphosphates other than ATP. The ATP gamma phosphate is transferred to the NDP beta phosphate via a ping-pong mechanism, using a phosphorylated active-site intermediate. The chain is Nucleoside diphosphate kinase from Geobacter sp. (strain M21).